Reading from the N-terminus, the 329-residue chain is Glycerol-3-phosphate dehydrogenase [NAD(P)+] (329 aa).

NADPH is bound by residues Trp-11, Arg-30, and Lys-103. Residues Lys-103, Gly-132, and Ser-134 each coordinate sn-glycerol 3-phosphate. An NADPH-binding site is contributed by Ala-136. 5 residues coordinate sn-glycerol 3-phosphate: Lys-187, Asp-240, Ser-250, Arg-251, and Asn-252. Lys-187 serves as the catalytic Proton acceptor. Residue Arg-251 coordinates NADPH. NADPH-binding residues include Val-275 and Glu-277.

Belongs to the NAD-dependent glycerol-3-phosphate dehydrogenase family.

Its subcellular location is the cytoplasm. The enzyme catalyses sn-glycerol 3-phosphate + NAD(+) = dihydroxyacetone phosphate + NADH + H(+). The catalysed reaction is sn-glycerol 3-phosphate + NADP(+) = dihydroxyacetone phosphate + NADPH + H(+). The protein operates within membrane lipid metabolism; glycerophospholipid metabolism. In terms of biological role, catalyzes the reduction of the glycolytic intermediate dihydroxyacetone phosphate (DHAP) to sn-glycerol 3-phosphate (G3P), the key precursor for phospholipid synthesis. In Dechloromonas aromatica (strain RCB), this protein is Glycerol-3-phosphate dehydrogenase [NAD(P)+].